The primary structure comprises 309 residues: Taste receptor type 2 member 8 (309 aa).

At 1-7 (MFSPADN) the chain is on the extracellular side. A helical transmembrane segment spans residues 8 to 28 (IFIILITGEFIIGILGNGYIG). The Cytoplasmic segment spans residues 29 to 50 (LVNWIDWIKKKKISTIDCILTN). Residues 51–71 (LVISRICLISVMVVNGIVIVL) form a helical membrane-spanning segment. Topologically, residues 72–82 (YPDVYTKTKLQ) are extracellular. Residues 83 to 103 (IVICTFWTFANYLNMWFTACL) traverse the membrane as a helical segment. Over 104 to 131 (NVFYSLKVANSSHPLFLWLKRKIDMVVR) the chain is Cytoplasmic. Residues 132–152 (WILLGCFAISLLVSLIIATVL) form a helical membrane-spanning segment. The Extracellular segment spans residues 153 to 184 (SHDYRFHAIAKHKRNVTEMFHVSKMPYFEPLT). A glycan (N-linked (GlcNAc...) asparagine) is linked at asparagine 167. The helical transmembrane segment at 185–205 (LFNLLAIVPFIVSLMSFFLLV) threads the bilayer. The Cytoplasmic portion of the chain corresponds to 206-239 (RSLWRHTKQIKLYATGGRDPSTEAHVRAIKTMTL). A helical transmembrane segment spans residues 240 to 260 (LIFFFFLYYITSLLVXFSYLI). Residues 261–266 (TNYKLA) are Extracellular-facing. A helical membrane pass occupies residues 267 to 287 (MAFGEIVAILYPSGHSLILII). Residues 288–309 (LNNKLRQASVRMLTCRKIACVT) lie on the Cytoplasmic side of the membrane.

It belongs to the G-protein coupled receptor T2R family.

It is found in the membrane. In terms of biological role, receptor that may play a role in the perception of bitterness and is gustducin-linked. May play a role in sensing the chemical composition of the gastrointestinal content. The activity of this receptor may stimulate alpha gustducin, mediate PLC-beta-2 activation and lead to the gating of TRPM5. The chain is Taste receptor type 2 member 8 (TAS2R8) from Papio hamadryas (Hamadryas baboon).